The following is a 335-amino-acid chain: Corrinoid adenosyltransferase PduO (335 aa).

Histidine 206 provides a ligand contact to heme.

The protein belongs to the Cob(I)alamin adenosyltransferase family. PduO subfamily. In terms of assembly, forms a complex with PduS. Heme b serves as cofactor. It depends on Mg(2+) as a cofactor.

The protein localises to the bacterial microcompartment. The enzyme catalyses cob(I)alamin-[corrinoid adenosyltransferase] + ATP = apo-[corrinoid adenosyltransferase] + adenosylcob(III)alamin + triphosphate. It functions in the pathway polyol metabolism; 1,2-propanediol degradation. Its pathway is cofactor biosynthesis; adenosylcobalamin biosynthesis. In terms of biological role, converts cob(I)alamin to adenosylcobalamin (adenosylcob(III)alamin), the cofactor for propanediol dehydratase. Found in the bacterial microcompartment (BMC) dedicated to 1,2-propanediol (1,2-PD) degradation. PduS and PduO allow regeneration of the adenosylcobalamin cofactor within the BMC. Expression of a cosmid containing the full 21-gene pdu operon in E.coli allows E.coli to grow on 1,2-propanediol (1,2-PD) with the appearance of bacterial microcompartments (BMC) in its cytoplasm. Functionally, the 1,2-PD-specific bacterial microcompartment (BMC) concentrates low levels of 1,2-PD catabolic enzymes, concentrates volatile reaction intermediates thus enhancing pathway flux and keeps the level of toxic, mutagenic propionaldehyde low. The sequence is that of Corrinoid adenosyltransferase PduO from Citrobacter freundii.